The chain runs to 466 residues: Chromosomal replication initiator protein DnaA (466 aa).

The tract at residues 1–86 is domain I, interacts with DnaA modulators; that stretch reads MSLSLWQQCL…EVGTKPVTQT (86 aa). The domain II stretch occupies residues 86 to 129; it reads TLKTPVHNVVAPTQTTTAQPQRVAPAARSGWDNVPAPAEPTYRS. The interval 130–346 is domain III, AAA+ region; the sequence is NVNVKHTFDN…GALNRVIANA (217 aa). The ATP site is built by G174, G176, K177, and T178. Residues 347-466 form a domain IV, binds dsDNA region; sequence NFTGRAITID…FSNLIRTLSS (120 aa).

Belongs to the DnaA family. As to quaternary structure, oligomerizes as a right-handed, spiral filament on DNA at oriC.

The protein resides in the cytoplasm. Its function is as follows. Plays an essential role in the initiation and regulation of chromosomal replication. ATP-DnaA binds to the origin of replication (oriC) to initiate formation of the DNA replication initiation complex once per cell cycle. Binds the DnaA box (a 9 base pair repeat at the origin) and separates the double-stranded (ds)DNA. Forms a right-handed helical filament on oriC DNA; dsDNA binds to the exterior of the filament while single-stranded (ss)DNA is stabiized in the filament's interior. The ATP-DnaA-oriC complex binds and stabilizes one strand of the AT-rich DNA unwinding element (DUE), permitting loading of DNA polymerase. After initiation quickly degrades to an ADP-DnaA complex that is not apt for DNA replication. Binds acidic phospholipids. This Salmonella gallinarum (strain 287/91 / NCTC 13346) protein is Chromosomal replication initiator protein DnaA.